We begin with the raw amino-acid sequence, 332 residues long: uncharacterized protein (332 aa).

Belongs to the peptidase U32 family.

This is an uncharacterized protein from Methanocaldococcus jannaschii (strain ATCC 43067 / DSM 2661 / JAL-1 / JCM 10045 / NBRC 100440) (Methanococcus jannaschii).